We begin with the raw amino-acid sequence, 522 residues long: Probable mannosyltransferase KTR5 (522 aa).

The Cytoplasmic portion of the chain corresponds to 1-16; that stretch reads MLLIRRTINAFLGCIH. The chain crosses the membrane as a helical; Signal-anchor for type II membrane protein span at residues 17-37; it reads CNLTATCILIAFVITMYVVLV. Residues 38 to 82 are stem region; sequence SEPASVDGTMGNFLPFSKMDLATKRDRPFYSNCVNTQDYLLNPSY. Residues 38-522 lie on the Lumenal side of the membrane; it reads SEPASVDGTM…REDYLRQFGN (485 aa). The interval 83-522 is catalytic; it reads IKQNASFVML…REDYLRQFGN (440 aa). An N-linked (GlcNAc...) asparagine glycan is attached at asparagine 86. Glutamate 363 functions as the Nucleophile in the catalytic mechanism.

It belongs to the glycosyltransferase 15 family.

It localises to the membrane. Functionally, possible glycosyltransferase that transfers an alpha-D-mannosyl residue from GDP-mannose into lipid-linked oligosaccharide, forming an alpha-(1-&gt;2)-D-mannosyl-D-mannose linkage. In Saccharomyces cerevisiae (strain ATCC 204508 / S288c) (Baker's yeast), this protein is Probable mannosyltransferase KTR5 (KTR5).